Here is a 228-residue protein sequence, read N- to C-terminus: Cutinase CUT1 (228 aa).

An N-terminal signal peptide occupies residues 1 to 16; that stretch reads MQFITVALTLIALASA. A disulfide bridge connects residues cysteine 49 and cysteine 127. Residue serine 138 is the Nucleophile of the active site. Cysteine 189 and cysteine 196 form a disulfide bridge. The N-linked (GlcNAc...) asparagine glycan is linked to asparagine 190. Aspartate 193 is an active-site residue. Residue histidine 206 is the Proton donor/acceptor of the active site.

The protein belongs to the cutinase family. In terms of processing, the 2 disulfide bonds play a critical role in holding the catalytic residues in juxta-position; reduction of the disulfide bridges results in the complete inactivation of the enzyme.

It is found in the secreted. It carries out the reaction cutin + H2O = cutin monomers.. Functionally, catalyzes the hydrolysis of complex carboxylic polyesters found in the cell wall of plants. Degrades cutin, a macromolecule that forms the structure of the plant cuticle. Required for efficient penetration of the host plant cuticle by the appressorium during the initial stage of fungal infection. The polypeptide is Cutinase CUT1 (Pyricularia oryzae (strain 70-15 / ATCC MYA-4617 / FGSC 8958) (Rice blast fungus)).